A 498-amino-acid polypeptide reads, in one-letter code: U4/U6 small nuclear ribonucleoprotein Prp31 (498 aa).

Residues 1-24 (MSLADELLADLEEAAEEEEENLID) form a disordered region. The segment covering 7 to 24 (LLADLEEAAEEEEENLID) has biased composition (acidic residues). 2 coiled-coil regions span residues 84-119 (EAAPEYKVIVDANNLTVEIENELNIIHKFIRDKYSK) and 180-214 (DEELERIEEACDMALELNQSKHRIYEYVESRMSFI). The Nop domain maps to 214 to 332 (IAPNLSIIVG…IERKFDKWQE (119 aa)). The segment at 333–356 (PPPVKQVKPLPAPLDGQRKKRGGR) is disordered. Residues 350–363 (RKKRGGRRYRKMKE) carry the Nuclear localization signal (NLS) motif.

This sequence belongs to the PRP31 family. Identified in the spliceosome B complex. Component of the U4/U6-U5 tri-snRNP complex. Component of some MLL1/MLL complex.

It localises to the nucleus. The protein resides in the nucleus speckle. It is found in the cajal body. Its function is as follows. Involved in pre-mRNA splicing as component of the spliceosome. Required for the assembly of the U4/U5/U6 tri-snRNP complex, one of the building blocks of the spliceosome. The polypeptide is U4/U6 small nuclear ribonucleoprotein Prp31 (prpf31) (Xenopus laevis (African clawed frog)).